Consider the following 61-residue polypeptide: MAKCFVTGKKKSFGNSRSHAMNANKRTWKVNLQKVRILVDGKPKRVWVSARALKSGKVQRV.

It belongs to the bacterial ribosomal protein bL28 family.

The chain is Large ribosomal subunit protein bL28 from Geobacillus sp. (strain WCH70).